Consider the following 496-residue polypeptide: GTPase Der (496 aa).

2 consecutive EngA-type G domains span residues 3-168 (PIIA…VPEK) and 210-383 (IKLA…DCST). GTP-binding positions include 9–16 (GRPNVGKS), 56–60 (DTGGI), 120–123 (NKID), 216–223 (GRPNVGKS), 263–267 (DTAGV), and 328–331 (NKWD). Positions 384–468 (KRINTSLLTR…PIRIQFKESE (85 aa)) constitute a KH-like domain.

The protein belongs to the TRAFAC class TrmE-Era-EngA-EngB-Septin-like GTPase superfamily. EngA (Der) GTPase family. Associates with the 50S ribosomal subunit.

Functionally, GTPase that plays an essential role in the late steps of ribosome biogenesis. This chain is GTPase Der, found in Hamiltonella defensa subsp. Acyrthosiphon pisum (strain 5AT).